We begin with the raw amino-acid sequence, 327 residues long: Annexin A8 (327 aa).

Annexin repeat units lie at residues 21–92, 93–164, 177–249, and 253–324; these read FNPD…ALMY, PPYR…CLLQ, GLAL…TVVK, and NLHS…SLVG. Residues methionine 266, glycine 268, glycine 270, and aspartate 310 each contribute to the Ca(2+) site.

This sequence belongs to the annexin family.

In terms of biological role, this protein is an anticoagulant protein that acts as an indirect inhibitor of the thromboplastin-specific complex, which is involved in the blood coagulation cascade. The polypeptide is Annexin A8 (Homo sapiens (Human)).